The following is a 499-amino-acid chain: Ethanolamine-phosphate phospho-lyase (499 aa).

N6-(pyridoxal phosphate)lysine is present on K278.

The protein belongs to the class-III pyridoxal-phosphate-dependent aminotransferase family. As to quaternary structure, homotetramer. It depends on pyridoxal 5'-phosphate as a cofactor.

It is found in the mitochondrion. The enzyme catalyses phosphoethanolamine + H2O = acetaldehyde + NH4(+) + phosphate. In terms of biological role, catalyzes the pyridoxal-phosphate-dependent breakdown of phosphoethanolamine, converting it to ammonia, inorganic phosphate and acetaldehyde. This chain is Ethanolamine-phosphate phospho-lyase (Etnppl), found in Mus musculus (Mouse).